A 318-amino-acid chain; its full sequence is Dehydration-responsive element-binding protein 2E (318 aa).

A compositionally biased stretch (basic residues) spans methionine 1–threonine 15. The disordered stretch occupies residues methionine 1–alanine 24. Residues glutamate 27–proline 84 constitute a DNA-binding region (AP2/ERF). Positions glutamate 140–serine 178 are disordered. Over residues threonine 149–threonine 168 the composition is skewed to pro residues.

Belongs to the AP2/ERF transcription factor family. ERF subfamily.

Its subcellular location is the nucleus. Functionally, probable transcriptional activator that binds to the DNA sequence 5'-[AG]CCGAC-3' of the cis-acting dehydration-responsive element (DRE). The polypeptide is Dehydration-responsive element-binding protein 2E (DREB2E) (Oryza sativa subsp. japonica (Rice)).